The primary structure comprises 296 residues: MTTTWWELQILCDPSLEETIFWRLDDFGCRGMAGEQKGQSYLIRAYSPQAEFDHLDLAALALLLKQDAVLAHLPKPVVKWHLIDEEDWSSSWKSHWQPEEIGDRLLIYPAWLEVPTHSERLLLRLDPGSAFGTGAHQTTQLCLEALEMRLGQQPETQVIADIGCGSGILSIGSLLLGAKQTFGVDTDILAVTASNSNRALNNIEPERMVVAQGSIDTLPKMYPEPFDGIVCNILAEIIIELIPKMSAIAKPDTWGILSGILIEQIQPIADTLEQNGWAIAALWKKDEWCCFNIRRN.

S-adenosyl-L-methionine-binding residues include Thr139, Gly163, Asp185, and Asn232.

It belongs to the methyltransferase superfamily. PrmA family.

The protein localises to the cytoplasm. The enzyme catalyses L-lysyl-[protein] + 3 S-adenosyl-L-methionine = N(6),N(6),N(6)-trimethyl-L-lysyl-[protein] + 3 S-adenosyl-L-homocysteine + 3 H(+). Its function is as follows. Methylates ribosomal protein L11. This chain is Ribosomal protein L11 methyltransferase, found in Picosynechococcus sp. (strain ATCC 27264 / PCC 7002 / PR-6) (Agmenellum quadruplicatum).